We begin with the raw amino-acid sequence, 349 residues long: Phosphoribosylformylglycinamidine cyclo-ligase (349 aa).

The protein belongs to the AIR synthase family.

Its subcellular location is the cytoplasm. The catalysed reaction is 2-formamido-N(1)-(5-O-phospho-beta-D-ribosyl)acetamidine + ATP = 5-amino-1-(5-phospho-beta-D-ribosyl)imidazole + ADP + phosphate + H(+). Its pathway is purine metabolism; IMP biosynthesis via de novo pathway; 5-amino-1-(5-phospho-D-ribosyl)imidazole from N(2)-formyl-N(1)-(5-phospho-D-ribosyl)glycinamide: step 2/2. The protein is Phosphoribosylformylglycinamidine cyclo-ligase of Methanococcus maripaludis (strain C7 / ATCC BAA-1331).